Consider the following 174-residue polypeptide: MNSLLIMGYTSFDLGIFNEKDIKVSIIKKTIKRKLINFLEEGLRWVIFTGNLGFEYWALEVAKELQTDYEFQIGTIFPFETHGQNWNENNQIKLASFKQVDFVKYAFEAYENPGQFRQYNEFLLENTEGSFVFYDEENETKLKYMVEKMKQSSNYEVYLLNFEDLQETFEEMND.

The protein belongs to the UPF0398 family.

This Lactococcus lactis subsp. cremoris (strain MG1363) protein is UPF0398 protein llmg_0513.